Here is a 122-residue protein sequence, read N- to C-terminus: Small ribosomal subunit protein uS13 (122 aa).

Residues 95 to 116 (GLPCRGQKTKTNARTRKGKKKT) are compositionally biased toward basic residues. The disordered stretch occupies residues 95–122 (GLPCRGQKTKTNARTRKGKKKTVGAATK).

It belongs to the universal ribosomal protein uS13 family. As to quaternary structure, part of the 30S ribosomal subunit. Forms a loose heterodimer with protein S19. Forms two bridges to the 50S subunit in the 70S ribosome.

In terms of biological role, located at the top of the head of the 30S subunit, it contacts several helices of the 16S rRNA. In the 70S ribosome it contacts the 23S rRNA (bridge B1a) and protein L5 of the 50S subunit (bridge B1b), connecting the 2 subunits; these bridges are implicated in subunit movement. Contacts the tRNAs in the A and P-sites. The chain is Small ribosomal subunit protein uS13 from Aliarcobacter butzleri (strain RM4018) (Arcobacter butzleri).